The primary structure comprises 202 residues: ATP-dependent Clp protease proteolytic subunit (202 aa).

The active-site Nucleophile is the Ser-106. His-131 is an active-site residue.

This sequence belongs to the peptidase S14 family. In terms of assembly, fourteen ClpP subunits assemble into 2 heptameric rings which stack back to back to give a disk-like structure with a central cavity, resembling the structure of eukaryotic proteasomes.

Its subcellular location is the cytoplasm. The enzyme catalyses Hydrolysis of proteins to small peptides in the presence of ATP and magnesium. alpha-casein is the usual test substrate. In the absence of ATP, only oligopeptides shorter than five residues are hydrolyzed (such as succinyl-Leu-Tyr-|-NHMec, and Leu-Tyr-Leu-|-Tyr-Trp, in which cleavage of the -Tyr-|-Leu- and -Tyr-|-Trp bonds also occurs).. In terms of biological role, cleaves peptides in various proteins in a process that requires ATP hydrolysis. Has a chymotrypsin-like activity. Plays a major role in the degradation of misfolded proteins. This chain is ATP-dependent Clp protease proteolytic subunit, found in Shewanella sp. (strain ANA-3).